We begin with the raw amino-acid sequence, 311 residues long: Porphobilinogen deaminase (311 aa).

Cys242 bears the S-(dipyrrolylmethanemethyl)cysteine mark.

This sequence belongs to the HMBS family. In terms of assembly, monomer. The cofactor is dipyrromethane.

It carries out the reaction 4 porphobilinogen + H2O = hydroxymethylbilane + 4 NH4(+). Its pathway is porphyrin-containing compound metabolism; protoporphyrin-IX biosynthesis; coproporphyrinogen-III from 5-aminolevulinate: step 2/4. Functionally, tetrapolymerization of the monopyrrole PBG into the hydroxymethylbilane pre-uroporphyrinogen in several discrete steps. The chain is Porphobilinogen deaminase (hemC) from Vibrio cholerae serotype O1 (strain ATCC 39315 / El Tor Inaba N16961).